The sequence spans 203 residues: ADP-ribosylation factor-like protein 6-interacting protein 1 (203 aa).

The Cytoplasmic segment spans residues 1–41 (MAEGDNRSTNLLAAETASLEEQLQGWGEVMLMADKVLRWER). The helical transmembrane segment at 42–62 (AWFPPAIMGVVSLVFLIIYYL) threads the bilayer. Residues 63–65 (DPS) are Lumenal-facing. Residues 66–86 (VLSGVSCFVMFLCLADYLVPI) form a helical membrane-spanning segment. At 87 to 133 (LAPRIFGSNKWTTEQQQRFHEICSNLVKTRRRAVGWWKRLFTLKEEK) the chain is on the cytoplasmic side. A helical transmembrane segment spans residues 134–175 (PKMYFMTMIVSLAAVAWVGQQVHNLLLTYLIVTSLLLLPGLN). Residues 176–203 (QHGIILKYIGMAKREINKLLKQKEKKNE) lie on the Lumenal side of the membrane.

Belongs to the ARL6ip family. In terms of assembly, homooligomer. Heterodimer with ARL6IP5. Interacts with ARL6. Interacts with TMEM33. Interacts with ATL1. In terms of tissue distribution, expressed in all hematopoietic cell lineages, but the highest level of expression is found in early myeloid progenitor cells. Expressed in brain, bone marrow, thymus and lung. Expressed at low level in liver, kidney and spleen. Not detected in heart.

The protein localises to the endomembrane system. The protein resides in the endoplasmic reticulum membrane. It is found in the endoplasmic reticulum. Positively regulates SLC1A1/EAAC1-mediated glutamate transport by increasing its affinity for glutamate in a PKC activity-dependent manner. Promotes the catalytic efficiency of SLC1A1/EAAC1 probably by reducing its interaction with ARL6IP5, a negative regulator of SLC1A1/EAAC1-mediated glutamate transport. Plays a role in the formation and stabilization of endoplasmic reticulum tubules. Negatively regulates apoptosis, possibly by modulating the activity of caspase-9 (CASP9). Inhibits cleavage of CASP9-dependent substrates and downstream markers of apoptosis but not CASP9 itself. May be involved in protein transport, membrane trafficking, or cell signaling during hematopoietic maturation. The polypeptide is ADP-ribosylation factor-like protein 6-interacting protein 1 (ARL6IP1) (Homo sapiens (Human)).